We begin with the raw amino-acid sequence, 293 residues long: Exosome complex component RRP4 (293 aa).

A disordered region spans residues methionine 1 to arginine 20. The region spanning glutamate 79–arginine 159 is the S1 motif domain. Serine 124 bears the Phosphoserine mark.

The protein belongs to the RRP4 family. Component of the RNA exosome core complex (Exo-9), composed of EXOSC1, EXOSC2, EXOSC3, EXOSC4, EXOSC5, EXOSC6, EXOSC7, EXOSC8 and EXOSC9; within the complex interacts with EXOSC4 and EXOSC7. The catalytically inactive RNA exosome core complex (Exo-9) associates with the catalytic subunit EXOSC10/RRP6. Exo-9 may associate with DIS3 to form the nucleolar exosome complex, or DIS3L to form the cytoplasmic exosome complex. Exo-9 is formed by a hexameric base ring consisting of the heterodimers EXOSC4-EXOSC9, EXOSC5-EXOSC8 and EXOSC6-EXOSC7, and a cap ring consisting of EXOSC1, EXOSC2 and EXOSC3. The RNA exosome complex associates with cofactors C1D/RRP47, MPHOSPH6/MPP6 and MTREX/MTR4. Interacts with GTPBP1. Interacts with ZFP36L1 (via N-terminus).

The protein localises to the cytoplasm. It localises to the nucleus. The protein resides in the nucleolus. Non-catalytic component of the RNA exosome complex which has 3'-&gt;5' exoribonuclease activity and participates in a multitude of cellular RNA processing and degradation events. In the nucleus, the RNA exosome complex is involved in proper maturation of stable RNA species such as rRNA, snRNA and snoRNA, in the elimination of RNA processing by-products and non-coding 'pervasive' transcripts, such as antisense RNA species and promoter-upstream transcripts (PROMPTs), and of mRNAs with processing defects, thereby limiting or excluding their export to the cytoplasm. The RNA exosome may be involved in Ig class switch recombination (CSR) and/or Ig variable region somatic hypermutation (SHM) by targeting AICDA deamination activity to transcribed dsDNA substrates. In the cytoplasm, the RNA exosome complex is involved in general mRNA turnover and specifically degrades inherently unstable mRNAs containing AU-rich elements (AREs) within their 3' untranslated regions, and in RNA surveillance pathways, preventing translation of aberrant mRNAs. It seems to be involved in degradation of histone mRNA. The catalytic inactive RNA exosome core complex of 9 subunits (Exo-9) is proposed to play a pivotal role in the binding and presentation of RNA for ribonucleolysis, and to serve as a scaffold for the association with catalytic subunits and accessory proteins or complexes. EXOSC2 as peripheral part of the Exo-9 complex stabilizes the hexameric ring of RNase PH-domain subunits through contacts with EXOSC4 and EXOSC7. In Mus musculus (Mouse), this protein is Exosome complex component RRP4 (Exosc2).